Consider the following 282-residue polypeptide: NAD(P)H-hydrate epimerase (282 aa).

The transit peptide at 1-53 (MSGLRTLLGLGLLVAGSRLPRVISQQSVCRARPIWWGTQRRGSETMAGAAVKY) directs the protein to the mitochondrion. Ser-43 is modified (phosphoserine; by PKA). One can recognise a YjeF N-terminal domain in the interval 59–269 (AQAVDQELFN…ALEKKYQLNL (211 aa)). 113–117 (NNGGD) provides a ligand contact to (6S)-NADPHX. Asn-114 contributes to the K(+) binding site. Lys-138 carries the N6-succinyllysine modification. Position 179 (Asp-179) interacts with K(+). (6S)-NADPHX contacts are provided by residues 183 to 189 (GFSFKGD) and Asp-212. Ser-215 contacts K(+).

Belongs to the NnrE/AIBP family. In terms of assembly, homodimer. Interacts with APOA1 and APOA2. Requires K(+) as cofactor. Undergoes physiological phosphorylation during sperm capacitation, downstream to PKA activation. As to expression, detected in testis and sperm (at protein level). Expressed at high levels in heart, liver, kidney, and testis.

The protein resides in the mitochondrion. It is found in the secreted. It catalyses the reaction (6R)-NADHX = (6S)-NADHX. It carries out the reaction (6R)-NADPHX = (6S)-NADPHX. Catalyzes the epimerization of the S- and R-forms of NAD(P)HX, a damaged form of NAD(P)H that is a result of enzymatic or heat-dependent hydration. This is a prerequisite for the S-specific NAD(P)H-hydrate dehydratase to allow the repair of both epimers of NAD(P)HX. Accelerates cholesterol efflux from endothelial cells to high-density lipoprotein (HDL) and thereby regulates angiogenesis. This Mus musculus (Mouse) protein is NAD(P)H-hydrate epimerase.